Here is an 89-residue protein sequence, read N- to C-terminus: Small ribosomal subunit protein uS15 (89 aa).

Residues 1–24 form a disordered region; sequence MSLNAETKAGIVEKYRRDPSDTGS. Basic and acidic residues predominate over residues 11-20; sequence IVEKYRRDPS.

This sequence belongs to the universal ribosomal protein uS15 family. Part of the 30S ribosomal subunit. Forms a bridge to the 50S subunit in the 70S ribosome, contacting the 23S rRNA.

In terms of biological role, one of the primary rRNA binding proteins, it binds directly to 16S rRNA where it helps nucleate assembly of the platform of the 30S subunit by binding and bridging several RNA helices of the 16S rRNA. Functionally, forms an intersubunit bridge (bridge B4) with the 23S rRNA of the 50S subunit in the ribosome. This Thioalkalivibrio sulfidiphilus (strain HL-EbGR7) protein is Small ribosomal subunit protein uS15.